Consider the following 132-residue polypeptide: NLP effector protein 15 (132 aa).

The short motif at 1-9 (MYSWYFPKD) is the Conserved undecapeptide motif I element. A Hepta-peptide GHRHDWE motif II motif is present at residues 16 to 22 (GHRHDWE).

The protein belongs to the Necrosis inducing protein (NPP1) family.

It localises to the secreted. Secreted effector that contributes moderately to virulence during infection by P.capsici. Causes only small yellow areas at 3 days after inoculation of host C.annuum leaves; these areas expand somewhat and became necrotic at 7 days after inoculation. Leads only to chlorotic areas, without necrosis at 7 days after non-host N.benthamiana leaves infection. The chain is NLP effector protein 15 from Phytophthora capsici.